The chain runs to 314 residues: Malate dehydrogenase (314 aa).

NAD(+) contacts are provided by residues 12-17 (GAGNIG) and Asp-36. 2 residues coordinate substrate: Arg-85 and Arg-91. NAD(+) contacts are provided by residues Asn-98 and 121-123 (VTN). 2 residues coordinate substrate: Asn-123 and Arg-154. His-178 functions as the Proton acceptor in the catalytic mechanism.

The protein belongs to the LDH/MDH superfamily. MDH type 3 family.

The enzyme catalyses (S)-malate + NAD(+) = oxaloacetate + NADH + H(+). Its function is as follows. Catalyzes the reversible oxidation of malate to oxaloacetate. The polypeptide is Malate dehydrogenase (Wolbachia pipientis subsp. Culex pipiens (strain wPip)).